Reading from the N-terminus, the 218-residue chain is Probable transaldolase (218 aa).

K87 functions as the Schiff-base intermediate with substrate in the catalytic mechanism.

Belongs to the transaldolase family. Type 3B subfamily.

The protein localises to the cytoplasm. It catalyses the reaction D-sedoheptulose 7-phosphate + D-glyceraldehyde 3-phosphate = D-erythrose 4-phosphate + beta-D-fructose 6-phosphate. The protein operates within carbohydrate degradation; pentose phosphate pathway; D-glyceraldehyde 3-phosphate and beta-D-fructose 6-phosphate from D-ribose 5-phosphate and D-xylulose 5-phosphate (non-oxidative stage): step 2/3. Transaldolase is important for the balance of metabolites in the pentose-phosphate pathway. The polypeptide is Probable transaldolase (Bacteroides fragilis (strain ATCC 25285 / DSM 2151 / CCUG 4856 / JCM 11019 / LMG 10263 / NCTC 9343 / Onslow / VPI 2553 / EN-2)).